The following is a 316-amino-acid chain: Melanocyte-stimulating hormone receptor (316 aa).

At 1–37 (MPMQGAHRKLLGSLNSTPTATSNLGLAANHTGAPCLE) the chain is on the extracellular side. N29 carries N-linked (GlcNAc...) asparagine glycosylation. The helical transmembrane segment at 38 to 63 (VSIPDGLFLSLGLVSLVENVLVVAAI) threads the bilayer. Residues 64–72 (AKNRNLHSS) are Cytoplasmic-facing. The helical transmembrane segment at 73 to 93 (MYCFICCLALSDLLVSGSNML) threads the bilayer. At 94-118 (ETAVILLLEAGALATRTSVVQQLHN) the chain is on the extracellular side. The helical transmembrane segment at 119–140 (TIDVLTCSSMLCSLCFLGAIAV) threads the bilayer. At 141-163 (DRYISIFYALRYHSIMTLPRAQR) the chain is on the cytoplasmic side. The chain crosses the membrane as a helical span at residues 164–183 (AIAAIWVASVLSSTLFITYY). The Extracellular portion of the chain corresponds to 184-191 (DHAAVLLC). A helical transmembrane segment spans residues 192–211 (LVVFFLAMLVLMAVLYVHML). At 212–240 (ARACQHAHGIIRLHKRQSPAHQGFGLRGA) the chain is on the cytoplasmic side. A helical transmembrane segment spans residues 241–266 (ATLTILLGIFFLCWGPFFLHLTLVVF). Residues 267-279 (CPQHLTCSCIFKN) are Extracellular-facing. Residues 280-300 (FKVFLTLIICNTIIDPLIYAF) form a helical membrane-spanning segment. The Cytoplasmic segment spans residues 301–316 (RSQELRRTLKEVLCSW). C314 is lipidated: S-palmitoyl cysteine.

Belongs to the G-protein coupled receptor 1 family. Interacts with MGRN1, but does not undergo MGRN1-mediated ubiquitination; this interaction competes with GNAS-binding and thus inhibits agonist-induced cAMP production. Interacts with OPN3; the interaction results in a decrease in MC1R-mediated cAMP signaling and ultimately a decrease in melanin production in melanocytes.

It localises to the cell membrane. Its function is as follows. Receptor for MSH (alpha, beta and gamma) and ACTH. The activity of this receptor is mediated by G proteins which activate adenylate cyclase. Mediates melanogenesis, the production of eumelanin (black/brown) and phaeomelanin (red/yellow), via regulation of cAMP signaling in melanocytes. The chain is Melanocyte-stimulating hormone receptor (MC1R) from Leontocebus fuscicollis (Brown-mantled tamarin).